The sequence spans 690 residues: Adhesion G protein-coupled receptor L4 (690 aa).

The N-terminal stretch at 1–19 (MKRLPLLVVFSTLLNCSYT) is a signal peptide. The EGF-like 1 domain maps to 20–57 (QNCTKTPCLPNAKCEIRNGIEACYCNMGFSGNGVTICE). Over 20–432 (QNCTKTPCLP…DYNILTRITQ (413 aa)) the chain is Extracellular. N-linked (GlcNAc...) asparagine glycosylation occurs at N21. Disulfide bonds link C22/C33, C27/C42, C44/C56, C62/C75, C69/C84, and C86/C107. The 51-residue stretch at 58-108 (DDNECGNLTQSCGENANCTNTEGSYYCMCVPGFRSSSNQDRFITNDGTVCI) folds into the EGF-like 2; calcium-binding domain. N-linked (GlcNAc...) asparagine glycans are attached at residues N64 and N74. N127, N177, N188, N249, N381, and N395 each carry an N-linked (GlcNAc...) asparagine glycan. Positions 244 to 419 (TEFDTNSTDI…AILMSSGPSI (176 aa)) constitute a GAIN-B domain. Disulfide bonds link C370/C401 and C389/C403. Residues 370-419 (CAFWNYSPDTMNGSWSSEGCELTYSNETHTSCRCNHLTHFAILMSSGPSI) are GPS. The chain crosses the membrane as a helical span at residues 433–453 (LGIIISLICLAICIFTFWFFS). Topologically, residues 454–460 (EIQSTRT) are cytoplasmic. A helical membrane pass occupies residues 461–481 (TIHKNLCCSLFLAELVFLVGI). The Extracellular segment spans residues 482–499 (NTNTNKLFCSIIAGLLHY). Residues 500–520 (FFLAAFAWMCIEGIHLYLIVV) form a helical membrane-spanning segment. Residues 521 to 532 (GVIYNKGFLHKN) lie on the Cytoplasmic side of the membrane. Residues 533 to 553 (FYIFGYLSPAVVVGFSAALGY) form a helical membrane-spanning segment. Topologically, residues 554–573 (RYYGTTKVCWLSTENNFIWS) are extracellular. The chain crosses the membrane as a helical span at residues 574–594 (FIGPACLIILVNLLAFGVIIY). Over 595–618 (KVFRHTAGLKPEVSCFENIRSCAR) the chain is Cytoplasmic. Residues 619–639 (GALALLFLLGTTWIFGVLHVV) traverse the membrane as a helical segment. Residues 640 to 646 (HASVVTA) lie on the Extracellular side of the membrane. The helical transmembrane segment at 647-667 (YLFTVSNAFQGMFIFLFLCVL) threads the bilayer. Topologically, residues 668–690 (SRKIQEEYYRLFKNVPCCFGCLR) are cytoplasmic.

Belongs to the G-protein coupled receptor 2 family. Adhesion G-protein coupled receptor (ADGR) subfamily. As to quaternary structure, heterodimer of 2 chains generated by proteolytic processing; the large extracellular N-terminal fragment and the membrane-bound C-terminal fragment predominantly remain associated and non-covalently linked. Glycosylated. Post-translationally, proteolytically cleaved into 2 subunits, an extracellular alpha subunit and a seven-transmembrane subunit. Detected in the majority of epithelial cells in tumor and normal tissues. Expressed also in human umbilical vein endothelial cells.

The protein resides in the cell membrane. Its function is as follows. Endothelial orphan receptor that acts as a key regulator of angiogenesis. This Homo sapiens (Human) protein is Adhesion G protein-coupled receptor L4.